The sequence spans 189 residues: Peptidyl-tRNA hydrolase (189 aa).

Tyr16 is a tRNA binding site. His21 serves as the catalytic Proton acceptor. TRNA contacts are provided by Phe67, Asn69, and Asn115.

Belongs to the PTH family. Monomer.

The protein localises to the cytoplasm. It catalyses the reaction an N-acyl-L-alpha-aminoacyl-tRNA + H2O = an N-acyl-L-amino acid + a tRNA + H(+). Its function is as follows. Hydrolyzes ribosome-free peptidyl-tRNAs (with 1 or more amino acids incorporated), which drop off the ribosome during protein synthesis, or as a result of ribosome stalling. Catalyzes the release of premature peptidyl moieties from peptidyl-tRNA molecules trapped in stalled 50S ribosomal subunits, and thus maintains levels of free tRNAs and 50S ribosomes. The chain is Peptidyl-tRNA hydrolase from Legionella pneumophila (strain Paris).